A 255-amino-acid chain; its full sequence is Imidazole glycerol phosphate synthase subunit HisF (255 aa).

Residues Asp11 and Asp130 contribute to the active site.

The protein belongs to the HisA/HisF family. In terms of assembly, heterodimer of HisH and HisF.

It localises to the cytoplasm. The enzyme catalyses 5-[(5-phospho-1-deoxy-D-ribulos-1-ylimino)methylamino]-1-(5-phospho-beta-D-ribosyl)imidazole-4-carboxamide + L-glutamine = D-erythro-1-(imidazol-4-yl)glycerol 3-phosphate + 5-amino-1-(5-phospho-beta-D-ribosyl)imidazole-4-carboxamide + L-glutamate + H(+). Its pathway is amino-acid biosynthesis; L-histidine biosynthesis; L-histidine from 5-phospho-alpha-D-ribose 1-diphosphate: step 5/9. In terms of biological role, IGPS catalyzes the conversion of PRFAR and glutamine to IGP, AICAR and glutamate. The HisF subunit catalyzes the cyclization activity that produces IGP and AICAR from PRFAR using the ammonia provided by the HisH subunit. The protein is Imidazole glycerol phosphate synthase subunit HisF of Rhodopseudomonas palustris (strain BisB5).